A 245-amino-acid polypeptide reads, in one-letter code: Small ribosomal subunit protein uS3 (245 aa).

The region spanning 39 to 107 (IRKAIREKLK…EVRVNLVEIR (69 aa)) is the KH type-2 domain. Residues 216–245 (DKRLETSGQSRARANTNQRGPASGAQAAGA) form a disordered region. Residues 221–235 (TSGQSRARANTNQRG) show a composition bias toward polar residues.

Belongs to the universal ribosomal protein uS3 family. Part of the 30S ribosomal subunit. Forms a tight complex with proteins S10 and S14.

Binds the lower part of the 30S subunit head. Binds mRNA in the 70S ribosome, positioning it for translation. The sequence is that of Small ribosomal subunit protein uS3 from Hyphomonas neptunium (strain ATCC 15444).